Here is an 878-residue protein sequence, read N- to C-terminus: Phosphoenolpyruvate carboxylase (878 aa).

Residues histidine 137 and lysine 545 contribute to the active site.

The protein belongs to the PEPCase type 1 family. Mg(2+) serves as cofactor.

The enzyme catalyses oxaloacetate + phosphate = phosphoenolpyruvate + hydrogencarbonate. Its function is as follows. Forms oxaloacetate, a four-carbon dicarboxylic acid source for the tricarboxylic acid cycle. This chain is Phosphoenolpyruvate carboxylase, found in Proteus mirabilis (strain HI4320).